The following is a 239-amino-acid chain: Large ribosomal subunit protein uL1 (239 aa).

Belongs to the universal ribosomal protein uL1 family. As to quaternary structure, part of the 50S ribosomal subunit.

Functionally, binds directly to 23S rRNA. The L1 stalk is quite mobile in the ribosome, and is involved in E site tRNA release. Its function is as follows. Protein L1 is also a translational repressor protein, it controls the translation of the L11 operon by binding to its mRNA. This Mycolicibacterium gilvum (strain PYR-GCK) (Mycobacterium gilvum (strain PYR-GCK)) protein is Large ribosomal subunit protein uL1.